The primary structure comprises 339 residues: 4-hydroxy-2-oxovalerate aldolase (339 aa).

The region spanning 7-257 is the Pyruvate carboxyltransferase domain; the sequence is IRIMDTTLRD…QVGVDLYKIM (251 aa). 15-16 provides a ligand contact to substrate; sequence RD. Position 16 (D16) interacts with Mn(2+). H19 functions as the Proton acceptor in the catalytic mechanism. The substrate site is built by S169 and H196. Residues H196 and H198 each coordinate Mn(2+). Y286 contacts substrate.

This sequence belongs to the 4-hydroxy-2-oxovalerate aldolase family.

The enzyme catalyses (S)-4-hydroxy-2-oxopentanoate = acetaldehyde + pyruvate. The protein is 4-hydroxy-2-oxovalerate aldolase of Pelotomaculum thermopropionicum (strain DSM 13744 / JCM 10971 / SI).